A 108-amino-acid polypeptide reads, in one-letter code: TYRO protein tyrosine kinase-binding protein (108 aa).

The N-terminal stretch at 1–25 (MEGLRPSDRLLSLLLTVGGLSLVLA) is a signal peptide. The Extracellular portion of the chain corresponds to 26 to 36 (QSECNCSSVSP). A helical transmembrane segment spans residues 37-57 (GVLAGIVLGDLMLTLLIALAV). A Ca(2+)-binding site is contributed by D46. Residues 58 to 108 (YYLGRLVPRGRGATEVTRKQHIPETESPYQELQGQRTDVYSDLNTQRPYYK) lie on the Cytoplasmic side of the membrane. The disordered stretch occupies residues 71-108 (TEVTRKQHIPETESPYQELQGQRTDVYSDLNTQRPYYK). The ITAM domain occupies 75 to 103 (RKQHIPETESPYQELQGQRTDVYSDLNTQ). Residues 84–108 (SPYQELQGQRTDVYSDLNTQRPYYK) are compositionally biased toward polar residues. Residues Y86 and Y97 each carry the phosphotyrosine modification.

This sequence belongs to the TYROBP family. As to quaternary structure, homodimer; disulfide-linked. Homotrimer; disulfide-linked. Homotetramer; disulfide-linked. Homotrimers and homotetramers form when low levels of partner receptors are available and is competitive with assembly with interacting receptors. They may represent alternative oligomerization states or may be intermediates in the receptor assembly process. Binding of a metal cation aids in homooligomerization through coordination of the metal ion by the subunits of the oligomer. Interacts with TREM1. Interacts with TREM2. Interacts with CLECSF5. Interacts with CD300LB and CD300C2. Interacts with CD300E. Interacts (via ITAM domain) with SYK (via SH2 domains); activates SYK mediating neutrophils and macrophages integrin-mediated activation. Interacts with KLRC2. Interacts with CD300H. Interacts with KLRD1. Interacts with SIGLEC1. In terms of processing, following ligand binding by associated receptors, tyrosine phosphorylated in the ITAM domain which leads to activation of additional tyrosine kinases and subsequent cell activation.

The protein localises to the cell membrane. Its function is as follows. Adapter protein which non-covalently associates with activating receptors found on the surface of a variety of immune cells to mediate signaling and cell activation following ligand binding by the receptors. TYROBP is tyrosine-phosphorylated in the ITAM domain following ligand binding by the associated receptors which leads to activation of additional tyrosine kinases and subsequent cell activation. Also has an inhibitory role in some cells. Non-covalently associates with activating receptors of the CD300 family to mediate cell activation. Also mediates cell activation through association with activating receptors of the CD200R family. Required for neutrophil activation mediated by integrin. Required for the activation of myeloid cells mediated by the CLEC5A/MDL1 receptor. Associates with natural killer (NK) cell receptors such as the KLRD1/KLRC2 heterodimer to mediate NK cell activation. Associates with TREM1 to mediate activation of neutrophils and monocytes. Associates with TREM2 on monocyte-derived dendritic cells to mediate up-regulation of chemokine receptor CCR7 and dendritic cell maturation and survival. Association with TREM2 mediates cytokine-induced formation of multinucleated giant cells which are formed by the fusion of macrophages. Stabilizes the TREM2 C-terminal fragment (TREM2-CTF) produced by TREM2 ectodomain shedding which suppresses the release of pro-inflammatory cytokines. In microglia, required with TREM2 for phagocytosis of apoptotic neurons. Required with ITGAM/CD11B in microglia to control production of microglial superoxide ions which promote the neuronal apoptosis that occurs during brain development. Promotes pro-inflammatory responses in microglia following nerve injury which accelerates degeneration of injured neurons. Positively regulates the expression of the IRAK3/IRAK-M kinase and IL10 production by liver dendritic cells and inhibits their T cell allosimulatory ability. Negatively regulates B cell proliferation. Required for CSF1-mediated osteoclast cytoskeletal organization. Positively regulates multinucleation during osteoclast development. This is TYRO protein tyrosine kinase-binding protein from Bos taurus (Bovine).